The following is a 392-amino-acid chain: Putative non-inhibitory serpin-10 (392 aa).

The RCL stretch occupies residues 333 to 357 (GTTAVEATYSCCSPTYSGPESPKPR).

The protein belongs to the serpin family.

The sequence is that of Putative non-inhibitory serpin-10 from Oryza sativa subsp. japonica (Rice).